The primary structure comprises 844 residues: Elongation factor 2 (844 aa).

A tr-type G domain is found at 17-255 (TNVRNMSVIA…LWGDNYFNPK (239 aa)). 26–33 (AHVDHGKS) provides a ligand contact to GTP. Phosphothreonine is present on residues Thr57 and Thr59. GTP-binding positions include 160–163 (NKVD) and 215–217 (SGL). His700 carries the diphthamide modification.

Belongs to the TRAFAC class translation factor GTPase superfamily. Classic translation factor GTPase family. EF-G/EF-2 subfamily.

The protein resides in the cytoplasm. It carries out the reaction GTP + H2O = GDP + phosphate + H(+). Its function is as follows. Catalyzes the GTP-dependent ribosomal translocation step during translation elongation. During this step, the ribosome changes from the pre-translocational (PRE) to the post-translocational (POST) state as the newly formed A-site-bound peptidyl-tRNA and P-site-bound deacylated tRNA move to the P and E sites, respectively. Catalyzes the coordinated movement of the two tRNA molecules, the mRNA and conformational changes in the ribosome. In Neurospora crassa (strain ATCC 24698 / 74-OR23-1A / CBS 708.71 / DSM 1257 / FGSC 987), this protein is Elongation factor 2 (cot-3).